Consider the following 123-residue polypeptide: Small ribosomal subunit protein uS12 (123 aa).

Residues 1–29 form a disordered region; it reads MPTINQLVRKGREPQKAKSKVPAMEQNPQ. Asp-89 bears the 3-methylthioaspartic acid mark.

This sequence belongs to the universal ribosomal protein uS12 family. As to quaternary structure, part of the 30S ribosomal subunit. Contacts proteins S8 and S17. May interact with IF1 in the 30S initiation complex.

Functionally, with S4 and S5 plays an important role in translational accuracy. Its function is as follows. Interacts with and stabilizes bases of the 16S rRNA that are involved in tRNA selection in the A site and with the mRNA backbone. Located at the interface of the 30S and 50S subunits, it traverses the body of the 30S subunit contacting proteins on the other side and probably holding the rRNA structure together. The combined cluster of proteins S8, S12 and S17 appears to hold together the shoulder and platform of the 30S subunit. The polypeptide is Small ribosomal subunit protein uS12 (Novosphingobium aromaticivorans (strain ATCC 700278 / DSM 12444 / CCUG 56034 / CIP 105152 / NBRC 16084 / F199)).